The following is a 95-amino-acid chain: Embryonic abundant protein 1 (95 aa).

Residues 1–10 (MASGQQQQGR) are compositionally biased toward polar residues. Positions 1–95 (MASGQQQQGR…IDESKYKTKS (95 aa)) are disordered. Composition is skewed to basic and acidic residues over residues 40–64 (AEGR…EMGR) and 75–95 (GGER…KTKS).

This sequence belongs to the small hydrophilic plant seed protein family. In terms of tissue distribution, expressed in dry seeds and immature embryos.

Em protein may act as a cytoplasm protectant during desiccation. The protein is Embryonic abundant protein 1 (EMP1) of Oryza sativa subsp. japonica (Rice).